Consider the following 404-residue polypeptide: Protein ARK2N (404 aa).

Composition is skewed to basic and acidic residues over residues 1–12 (MKMEEAVGKVEE) and 23–32 (SEQETAKEED). 2 disordered regions span residues 1–50 (MKME…ADST) and 63–255 (RRDS…TNSD). A Phosphoserine modification is found at Ser-66. Position 67 is a phosphoserine; by AMPK (Ser-67). The segment covering 87-121 (SDSSNHCMLSPSSSGHLADSDTLSSAEENEPSQAE) has biased composition (polar residues). Residues Ser-143, Ser-145, and Ser-147 each carry the phosphoserine modification. Positions 169 to 187 (AKVKGHRSQKHKERIRLLR) are enriched in basic residues. Residues 175–200 (RSQKHKERIRLLRQKREAAARKKYNL) are a coiled coil. Residues 202 to 226 (QDSSTSDSDLTCDSSTSSSDDDEEV) are required for interaction with CSNK2B. The span at 203-219 (DSSTSDSDLTCDSSTSS) shows a compositional bias: low complexity. Phosphoserine occurs at positions 327, 328, and 330. An Omega-N-methylarginine modification is found at Arg-347. Residue Lys-358 forms a Glycyl lysine isopeptide (Lys-Gly) (interchain with G-Cter in SUMO2) linkage.

Interacts with CSNK2B (via KSSR). Interacts with JUN; the interaction is mediated by CSNK2B. In terms of processing, phosphorylated at Ser-67 by AMPK. In skeletal muscle, phosphorylation is induced by exercise and seems to increase muscle contractile function. As to expression, expressed in skeletal muscle.

The protein localises to the nucleus. Functionally, AMPK substrate important for exercise capacity and skeletal muscle function. Required for normal contraction-induced signaling. In terms of biological role, (Microbial infection) Upon Epstein-Barr virus (EBV) infection, suppresses viral BZLF1 expression and subsequent EBV reactivation by interacting with JUN and inhibiting its transcriptional activator activity on BZLF1 Z promoter. The protein is Protein ARK2N of Homo sapiens (Human).